A 356-amino-acid polypeptide reads, in one-letter code: Histidinol-phosphate aminotransferase (356 aa).

Position 214 is an N6-(pyridoxal phosphate)lysine (K214).

Belongs to the class-II pyridoxal-phosphate-dependent aminotransferase family. Histidinol-phosphate aminotransferase subfamily. As to quaternary structure, homodimer. It depends on pyridoxal 5'-phosphate as a cofactor.

The catalysed reaction is L-histidinol phosphate + 2-oxoglutarate = 3-(imidazol-4-yl)-2-oxopropyl phosphate + L-glutamate. The protein operates within amino-acid biosynthesis; L-histidine biosynthesis; L-histidine from 5-phospho-alpha-D-ribose 1-diphosphate: step 7/9. This is Histidinol-phosphate aminotransferase from Shigella boydii serotype 4 (strain Sb227).